The chain runs to 308 residues: Quinolinate synthase (308 aa).

Iminosuccinate contacts are provided by histidine 24 and serine 41. Cysteine 86 serves as a coordination point for [4Fe-4S] cluster. Iminosuccinate-binding positions include 112–114 and serine 129; that span reads YIN. Residue cysteine 172 coordinates [4Fe-4S] cluster. Residues 198 to 200 and threonine 215 contribute to the iminosuccinate site; that span reads HPE. Position 265 (cysteine 265) interacts with [4Fe-4S] cluster.

Belongs to the quinolinate synthase family. Type 2 subfamily. Requires [4Fe-4S] cluster as cofactor.

The protein localises to the cytoplasm. The enzyme catalyses iminosuccinate + dihydroxyacetone phosphate = quinolinate + phosphate + 2 H2O + H(+). It participates in cofactor biosynthesis; NAD(+) biosynthesis; quinolinate from iminoaspartate: step 1/1. Its function is as follows. Catalyzes the condensation of iminoaspartate with dihydroxyacetone phosphate to form quinolinate. This is Quinolinate synthase from Sulfurihydrogenibium sp. (strain YO3AOP1).